The primary structure comprises 353 residues: Photosystem II protein D1 (353 aa).

Residue Thr2 is modified to N-acetylthreonine. At Thr2 the chain carries Phosphothreonine. The next 3 membrane-spanning stretches (helical) occupy residues Tyr29–Ser46, His118–Leu133, and Trp142–Ala156. His118 lines the chlorophyll a pocket. Tyr126 provides a ligand contact to pheophytin a. Positions 170 and 189 each coordinate [CaMn4O5] cluster. The helical transmembrane segment at Phe197–Leu218 threads the bilayer. Position 198 (His198) interacts with chlorophyll a. Residues His215 and Ser264–Phe265 contribute to the a quinone site. His215 contributes to the Fe cation binding site. Position 272 (His272) interacts with Fe cation. The chain crosses the membrane as a helical span at residues Phe274 to Leu288. Residues His332, Glu333, Asp342, and Ala344 each contribute to the [CaMn4O5] cluster site. Residues Ala345–Gly353 constitute a propeptide that is removed on maturation.

Belongs to the reaction center PufL/M/PsbA/D family. As to quaternary structure, PSII is composed of 1 copy each of membrane proteins PsbA, PsbB, PsbC, PsbD, PsbE, PsbF, PsbH, PsbI, PsbJ, PsbK, PsbL, PsbM, PsbT, PsbX, PsbY, PsbZ, Psb30/Ycf12, at least 3 peripheral proteins of the oxygen-evolving complex and a large number of cofactors. It forms dimeric complexes. The cofactor is The D1/D2 heterodimer binds P680, chlorophylls that are the primary electron donor of PSII, and subsequent electron acceptors. It shares a non-heme iron and each subunit binds pheophytin, quinone, additional chlorophylls, carotenoids and lipids. D1 provides most of the ligands for the Mn4-Ca-O5 cluster of the oxygen-evolving complex (OEC). There is also a Cl(-1) ion associated with D1 and D2, which is required for oxygen evolution. The PSII complex binds additional chlorophylls, carotenoids and specific lipids.. Tyr-161 forms a radical intermediate that is referred to as redox-active TyrZ, YZ or Y-Z. Post-translationally, C-terminally processed by CTPA; processing is essential to allow assembly of the oxygen-evolving complex and thus photosynthetic growth.

The protein localises to the plastid. It is found in the chloroplast thylakoid membrane. The catalysed reaction is 2 a plastoquinone + 4 hnu + 2 H2O = 2 a plastoquinol + O2. Its function is as follows. Photosystem II (PSII) is a light-driven water:plastoquinone oxidoreductase that uses light energy to abstract electrons from H(2)O, generating O(2) and a proton gradient subsequently used for ATP formation. It consists of a core antenna complex that captures photons, and an electron transfer chain that converts photonic excitation into a charge separation. The D1/D2 (PsbA/PsbD) reaction center heterodimer binds P680, the primary electron donor of PSII as well as several subsequent electron acceptors. This chain is Photosystem II protein D1, found in Hordeum vulgare (Barley).